Reading from the N-terminus, the 157-residue chain is 3-dehydroquinate dehydratase (157 aa).

Residue Tyr-24 is the Proton acceptor of the active site. Substrate is bound by residues Asn-75, His-81, and Asp-88. His-101 acts as the Proton donor in catalysis. Substrate-binding positions include Leu-102–Ser-103 and Arg-112.

It belongs to the type-II 3-dehydroquinase family. In terms of assembly, homododecamer.

It carries out the reaction 3-dehydroquinate = 3-dehydroshikimate + H2O. The protein operates within metabolic intermediate biosynthesis; chorismate biosynthesis; chorismate from D-erythrose 4-phosphate and phosphoenolpyruvate: step 3/7. Its function is as follows. Catalyzes a trans-dehydration via an enolate intermediate. In Brucella canis (strain ATCC 23365 / NCTC 10854 / RM-666), this protein is 3-dehydroquinate dehydratase.